Here is a 939-residue protein sequence, read N- to C-terminus: Valine--tRNA ligase (939 aa).

Positions 45-55 (PNVTGTLHMGH) match the 'HIGH' region motif. A 'KMSKS' region motif is present at residues 549–553 (KMSKS). Lysine 552 is an ATP binding site. Positions 876-939 (AAETARLRKE…KIRVQLVKLA (64 aa)) form a coiled coil.

This sequence belongs to the class-I aminoacyl-tRNA synthetase family. ValS type 1 subfamily. Monomer.

The protein resides in the cytoplasm. It catalyses the reaction tRNA(Val) + L-valine + ATP = L-valyl-tRNA(Val) + AMP + diphosphate. Its function is as follows. Catalyzes the attachment of valine to tRNA(Val). As ValRS can inadvertently accommodate and process structurally similar amino acids such as threonine, to avoid such errors, it has a 'posttransfer' editing activity that hydrolyzes mischarged Thr-tRNA(Val) in a tRNA-dependent manner. In Chromobacterium violaceum (strain ATCC 12472 / DSM 30191 / JCM 1249 / CCUG 213 / NBRC 12614 / NCIMB 9131 / NCTC 9757 / MK), this protein is Valine--tRNA ligase.